A 598-amino-acid polypeptide reads, in one-letter code: UvrABC system protein C (598 aa).

One can recognise a GIY-YIG domain in the interval 13-91 (TLPGVYRMVD…IKGLKPRFNI (79 aa)). A UVR domain is found at 200-235 (TALTEEITAQMNAAAENLDFETAAYLRDRLRMLATV).

Belongs to the UvrC family. In terms of assembly, interacts with UvrB in an incision complex.

Its subcellular location is the cytoplasm. The UvrABC repair system catalyzes the recognition and processing of DNA lesions. UvrC both incises the 5' and 3' sides of the lesion. The N-terminal half is responsible for the 3' incision and the C-terminal half is responsible for the 5' incision. This chain is UvrABC system protein C, found in Thiobacillus denitrificans (strain ATCC 25259 / T1).